We begin with the raw amino-acid sequence, 349 residues long: tRNA pseudouridine synthase D (349 aa).

A substrate-binding site is contributed by Phe-27. Asp-80 (nucleophile) is an active-site residue. A substrate-binding site is contributed by Asn-129. One can recognise a TRUD domain in the interval 155-303 (GVPNYFGAQR…VEASRRAMLL (149 aa)). Position 329 (Phe-329) interacts with substrate.

This sequence belongs to the pseudouridine synthase TruD family.

The enzyme catalyses uridine(13) in tRNA = pseudouridine(13) in tRNA. Functionally, responsible for synthesis of pseudouridine from uracil-13 in transfer RNAs. The polypeptide is tRNA pseudouridine synthase D (Salmonella newport (strain SL254)).